Reading from the N-terminus, the 1317-residue chain is DNA-directed RNA polymerase subunit beta' (1317 aa).

Positions 60, 62, 75, and 78 each coordinate Zn(2+). Mg(2+)-binding residues include aspartate 535, aspartate 537, and aspartate 539. 4 residues coordinate Zn(2+): cysteine 890, cysteine 967, cysteine 974, and cysteine 977.

This sequence belongs to the RNA polymerase beta' chain family. As to quaternary structure, the RNAP catalytic core consists of 2 alpha, 1 beta, 1 beta' and 1 omega subunit. When a sigma factor is associated with the core the holoenzyme is formed, which can initiate transcription. Mg(2+) is required as a cofactor. Requires Zn(2+) as cofactor.

It catalyses the reaction RNA(n) + a ribonucleoside 5'-triphosphate = RNA(n+1) + diphosphate. In terms of biological role, DNA-dependent RNA polymerase catalyzes the transcription of DNA into RNA using the four ribonucleoside triphosphates as substrates. This Mycolicibacterium smegmatis (strain ATCC 700084 / mc(2)155) (Mycobacterium smegmatis) protein is DNA-directed RNA polymerase subunit beta'.